The primary structure comprises 149 residues: Protein FAM72C (149 aa).

This sequence belongs to the FAM72 family.

This Homo sapiens (Human) protein is Protein FAM72C (FAM72C).